A 99-amino-acid polypeptide reads, in one-letter code: Large ribosomal subunit protein bL28 (99 aa).

Residues 1 to 25 (MSRKCAVTGKGVQTGNNVSHANNKS) form a disordered region. Residues 11–22 (GVQTGNNVSHAN) show a composition bias toward polar residues.

It belongs to the bacterial ribosomal protein bL28 family.

The sequence is that of Large ribosomal subunit protein bL28 from Rhodospirillum centenum (strain ATCC 51521 / SW).